The primary structure comprises 89 residues: Small ribosomal subunit protein uS15 (89 aa).

This sequence belongs to the universal ribosomal protein uS15 family. In terms of assembly, part of the 30S ribosomal subunit. Forms a bridge to the 50S subunit in the 70S ribosome, contacting the 23S rRNA.

Functionally, one of the primary rRNA binding proteins, it binds directly to 16S rRNA where it helps nucleate assembly of the platform of the 30S subunit by binding and bridging several RNA helices of the 16S rRNA. In terms of biological role, forms an intersubunit bridge (bridge B4) with the 23S rRNA of the 50S subunit in the ribosome. This is Small ribosomal subunit protein uS15 from Burkholderia mallei (strain NCTC 10247).